The sequence spans 414 residues: DNA polymerase IV 1 (414 aa).

A UmuC domain is found at 8–189 (IFHIDMNSFY…LPVGEMHGVG (182 aa)). Residues Asp-12 and Asp-108 each coordinate Mg(2+). Glu-109 is an active-site residue. A disordered region spans residues 391–414 (LKKEESKTKGTSFNKDFFQDEKKS).

It belongs to the DNA polymerase type-Y family. Monomer. Requires Mg(2+) as cofactor.

It is found in the cytoplasm. It carries out the reaction DNA(n) + a 2'-deoxyribonucleoside 5'-triphosphate = DNA(n+1) + diphosphate. Functionally, poorly processive, error-prone DNA polymerase involved in untargeted mutagenesis. Copies undamaged DNA at stalled replication forks, which arise in vivo from mismatched or misaligned primer ends. These misaligned primers can be extended by PolIV. Exhibits no 3'-5' exonuclease (proofreading) activity. May be involved in translesion synthesis (TSL), in conjunction with the beta clamp from PolIII. This Bacillus subtilis (strain 168) protein is DNA polymerase IV 1 (dinB1).